Consider the following 97-residue polypeptide: uncharacterized protein (97 aa).

Residues 2-95 (IRHLVLFKLN…EFATWVIADY (94 aa)) enclose the Stress-response A/B barrel domain.

This is an uncharacterized protein from Streptomyces coelicolor (strain ATCC BAA-471 / A3(2) / M145).